The following is a 78-amino-acid chain: Large ribosomal subunit protein uL24 (78 aa).

This sequence belongs to the universal ribosomal protein uL24 family. In terms of assembly, part of the 50S ribosomal subunit.

Functionally, one of two assembly initiator proteins, it binds directly to the 5'-end of the 23S rRNA, where it nucleates assembly of the 50S subunit. Its function is as follows. One of the proteins that surrounds the polypeptide exit tunnel on the outside of the subunit. The sequence is that of Large ribosomal subunit protein uL24 from Helicobacter hepaticus (strain ATCC 51449 / 3B1).